A 491-amino-acid chain; its full sequence is UDP-N-acetylmuramate--L-alanine ligase (491 aa).

126-132 provides a ligand contact to ATP; the sequence is GTHGKTT.

This sequence belongs to the MurCDEF family.

The protein localises to the cytoplasm. The enzyme catalyses UDP-N-acetyl-alpha-D-muramate + L-alanine + ATP = UDP-N-acetyl-alpha-D-muramoyl-L-alanine + ADP + phosphate + H(+). The protein operates within cell wall biogenesis; peptidoglycan biosynthesis. Functionally, cell wall formation. The sequence is that of UDP-N-acetylmuramate--L-alanine ligase from Yersinia enterocolitica serotype O:8 / biotype 1B (strain NCTC 13174 / 8081).